Consider the following 359-residue polypeptide: GDSL esterase/lipase At5g03610 (359 aa).

The signal sequence occupies residues 1–22; sequence MDSLIKLFFCLFIFLCTSLLFG. The Nucleophile role is filled by Ser50. N-linked (GlcNAc...) asparagine glycosylation is found at Asn136, Asn236, and Asn259. Residues Asp332 and His335 contribute to the active site.

It belongs to the 'GDSL' lipolytic enzyme family.

The protein localises to the secreted. The sequence is that of GDSL esterase/lipase At5g03610 from Arabidopsis thaliana (Mouse-ear cress).